We begin with the raw amino-acid sequence, 575 residues long: Carboxylesterase 5A (575 aa).

The first 27 residues, 1-27 (MSGEWGHLGQTLIWAVWVLAAATEGPA), serve as a signal peptide directing secretion. Asparagine 82 carries an N-linked (GlcNAc...) asparagine glycan. A disulfide bond links cysteine 94 and cysteine 121. Serine 226 functions as the Acyl-ester intermediate in the catalytic mechanism. Residues cysteine 280 and cysteine 291 are joined by a disulfide bond. N-linked (GlcNAc...) asparagine glycosylation is present at asparagine 281. Glutamate 345 acts as the Charge relay system in catalysis. N-linked (GlcNAc...) asparagine glycosylation is present at asparagine 363. Histidine 454 (charge relay system) is an active-site residue. N-linked (GlcNAc...) asparagine glycosylation is present at asparagine 524.

This sequence belongs to the type-B carboxylesterase/lipase family. Post-translationally, N-glycosylated.

Its subcellular location is the secreted. It carries out the reaction a carboxylic ester + H2O = an alcohol + a carboxylate + H(+). Functionally, involved in the detoxification of xenobiotics and in the activation of ester and amide prodrugs. The protein is Carboxylesterase 5A (CES5A) of Canis lupus familiaris (Dog).